A 376-amino-acid polypeptide reads, in one-letter code: Transmembrane protein 183A (376 aa).

2 disordered regions span residues M1–K20 and M100–G127. Residues L300–V320 form a helical membrane-spanning segment.

Belongs to the TMEM183 family.

It localises to the membrane. The protein is Transmembrane protein 183A (TMEM183A) of Homo sapiens (Human).